Consider the following 107-residue polypeptide: U1-lycotoxin-Ls1o (107 aa).

The signal sequence occupies residues 1-20; that stretch reads MMKVLVVVALLVTLISYSSS. Positions 21 to 41 are excised as a propeptide; it reads EGIDDLEADELLSLMANEQTR. Intrachain disulfides connect C44–C59, C51–C68, C58–C86, and C70–C84.

It belongs to the neurotoxin 19 (CSTX) family. 04 (U1-Lctx) subfamily. Expressed by the venom gland.

Its subcellular location is the secreted. The sequence is that of U1-lycotoxin-Ls1o from Lycosa singoriensis (Wolf spider).